Consider the following 584-residue polypeptide: Proteasome-associated ATPase (584 aa).

A coiled-coil region spans residues 8 to 90 (RHAERDRDEL…KEEVDRLSQP (83 aa)). Position 272–277 (272–277 (GCGKTL)) interacts with ATP. Positions 583 to 584 (YL) are docks into pockets in the proteasome alpha-ring.

It belongs to the AAA ATPase family. In terms of assembly, homohexamer. Assembles into a hexameric ring structure that caps the 20S proteasome core. Strongly interacts with the prokaryotic ubiquitin-like protein Pup through a hydrophobic interface; the interacting region of ARC lies in its N-terminal coiled-coil domain. There is one Pup binding site per ARC hexamer ring. Upon ATP-binding, the C-terminus of ARC interacts with the alpha-rings of the proteasome core, possibly by binding to the intersubunit pockets.

The protein operates within protein degradation; proteasomal Pup-dependent pathway. ATPase which is responsible for recognizing, binding, unfolding and translocation of pupylated proteins into the bacterial 20S proteasome core particle. May be essential for opening the gate of the 20S proteasome via an interaction with its C-terminus, thereby allowing substrate entry and access to the site of proteolysis. Thus, the C-termini of the proteasomal ATPase may function like a 'key in a lock' to induce gate opening and therefore regulate proteolysis. The chain is Proteasome-associated ATPase from Thermobifida fusca (strain YX).